Reading from the N-terminus, the 412-residue chain is Mast cell carboxypeptidase A (412 aa).

The first 10 residues, 1–10 (LMGVIYSTLA), serve as a signal peptide directing secretion. A propeptide spans 11–104 (IAPVQFDREK…IDKQFDVKEE (94 aa)) (activation peptide). In terms of domain architecture, Peptidase M14 spans 113 to 407 (KYNDWNKIVS…LSVKFIAKYI (295 aa)). Disulfide bonds link Cys168–Cys181 and Cys240–Cys263. 2 residues coordinate Zn(2+): His171 and Glu174. His299 contributes to the Zn(2+) binding site. Glu373 acts as the Proton donor/acceptor in catalysis.

It belongs to the peptidase M14 family. The cofactor is Zn(2+).

It localises to the cytoplasmic vesicle. Its subcellular location is the secretory vesicle. It catalyses the reaction Release of a C-terminal amino acid, but little or no action with -Asp, -Glu, -Arg, -Lys or -Pro.. The sequence is that of Mast cell carboxypeptidase A (Cpa3) from Rattus norvegicus (Rat).